A 233-amino-acid polypeptide reads, in one-letter code: Large ribosomal subunit protein uL1 (233 aa).

It belongs to the universal ribosomal protein uL1 family. As to quaternary structure, part of the 50S ribosomal subunit.

Binds directly to 23S rRNA. The L1 stalk is quite mobile in the ribosome, and is involved in E site tRNA release. Its function is as follows. Protein L1 is also a translational repressor protein, it controls the translation of the L11 operon by binding to its mRNA. The polypeptide is Large ribosomal subunit protein uL1 (Proteus vulgaris).